Reading from the N-terminus, the 223-residue chain is Probable glutathione S-transferase (223 aa).

The GST N-terminal domain maps to 2–81 (AEVKLLGFWY…YIDETFEGPS (80 aa)). Residues Ser-12, Lys-39, Val-53, and 65 to 66 (ES) each bind glutathione. In terms of domain architecture, GST C-terminal spans 86–212 (DPYDRALARF…ELLAFFRARF (127 aa)).

Belongs to the GST superfamily. HSP26 family. In terms of tissue distribution, root tip-specific expression.

It carries out the reaction RX + glutathione = an S-substituted glutathione + a halide anion + H(+). The sequence is that of Probable glutathione S-transferase from Nicotiana tabacum (Common tobacco).